The following is a 643-amino-acid chain: 3D-(3,5/4)-trihydroxycyclohexane-1,2-dione hydrolase (643 aa).

Glutamate 65 provides a ligand contact to thiamine diphosphate. The thiamine pyrophosphate binding stretch occupies residues 441–521 (SLPGDLQRMW…VNVLLFDNCG (81 aa)). 2 residues coordinate Mg(2+): aspartate 492 and asparagine 519.

Belongs to the TPP enzyme family. The cofactor is Mg(2+). Requires thiamine diphosphate as cofactor.

The enzyme catalyses 3D-3,5/4-trihydroxycyclohexane-1,2-dione + H2O = 5-deoxy-D-glucuronate + H(+). It participates in polyol metabolism; myo-inositol degradation into acetyl-CoA; acetyl-CoA from myo-inositol: step 3/7. In terms of biological role, involved in the cleavage of the C1-C2 bond of 3D-(3,5/4)-trihydroxycyclohexane-1,2-dione (THcHDO) to yield 5-deoxy-glucuronate (5DG). This is 3D-(3,5/4)-trihydroxycyclohexane-1,2-dione hydrolase from Clostridium botulinum (strain Eklund 17B / Type B).